A 142-amino-acid chain; its full sequence is 3-hydroxyacyl-[acyl-carrier-protein] dehydratase FabZ (142 aa).

H47 is a catalytic residue.

Belongs to the thioester dehydratase family. FabZ subfamily.

The protein localises to the cytoplasm. The catalysed reaction is a (3R)-hydroxyacyl-[ACP] = a (2E)-enoyl-[ACP] + H2O. Functionally, involved in unsaturated fatty acids biosynthesis. Catalyzes the dehydration of short chain beta-hydroxyacyl-ACPs and long chain saturated and unsaturated beta-hydroxyacyl-ACPs. The sequence is that of 3-hydroxyacyl-[acyl-carrier-protein] dehydratase FabZ from Coxiella burnetii (strain RSA 331 / Henzerling II).